The following is a 155-amino-acid chain: uncharacterized protein (155 aa).

Residues 1–34 (MESLQTPQHRENQDKREKEYGVKHMPMGNNAGNL) are disordered. Residues 8-22 (QHRENQDKREKEYGV) are compositionally biased toward basic and acidic residues. A helical transmembrane segment spans residues 115–135 (MSLLLLPAFSGLTWAPFLFLF).

The protein localises to the membrane. This is an uncharacterized protein from Homo sapiens (Human).